The chain runs to 101 residues: Ascorbate-specific PTS system EIIB component (101 aa).

One can recognise a PTS EIIB type-2 domain in the interval 3 to 96 (VRILAVCGNG…KLLEVIKAHF (94 aa)). Cys9 (phosphocysteine intermediate) is an active-site residue. Position 9 is a phosphocysteine (Cys9).

Its subcellular location is the cytoplasm. The enzyme catalyses N(pros)-phospho-L-histidyl-[protein] + L-ascorbate(out) = L-ascorbate 6-phosphate(in) + L-histidyl-[protein]. The phosphoenolpyruvate-dependent sugar phosphotransferase system (sugar PTS), a major carbohydrate active transport system, catalyzes the phosphorylation of incoming sugar substrates concomitantly with their translocation across the cell membrane. The enzyme II UlaABC PTS system is involved in ascorbate transport. In Shigella sonnei (strain Ss046), this protein is Ascorbate-specific PTS system EIIB component (ulaB).